Reading from the N-terminus, the 239-residue chain is Gene 88 protein (239 aa).

In Mycobacterium (Mycobacteriophage L5), this protein is Gene 88 protein (88).